The primary structure comprises 460 residues: Vitamin K-dependent protein C (460 aa).

The N-terminal stretch at Met1–Ser18 is a signal peptide. A propeptide spanning residues Ile19–Arg41 is cleaved from the precursor. The Gla domain occupies Ala42–Asp87. Glu47, Glu48, Glu55, Glu57, Glu60, Glu61, Glu66, Glu67, Glu70, and Glu76 each carry 4-carboxyglutamate. Cys58 and Cys63 are joined by a disulfide. 9 disulfides stabilise this stretch: Cys91–Cys110, Cys100–Cys105, Cys104–Cys119, Cys121–Cys130, Cys139–Cys150, Cys146–Cys159, Cys161–Cys174, Cys182–Cys319, and Cys238–Cys254. 2 EGF-like domains span residues Leu96–Gln131 and Arg135–Lys175. A (3R)-3-hydroxyaspartate modification is found at Asp112. The 237-residue stretch at Val213–Gly449 folds into the Peptidase S1 domain. N-linked (GlcNAc...) asparagine glycosylation occurs at Asn214. His253 acts as the Charge relay system in catalysis. Asn290 is a glycosylation site (N-linked (GlcNAc...) asparagine). Asp299 (charge relay system) is an active-site residue. Asn354 carries N-linked (GlcNAc...) asparagine glycosylation. Cystine bridges form between Cys372–Cys386 and Cys397–Cys425. The active-site Charge relay system is Ser401.

It belongs to the peptidase S1 family. In terms of assembly, synthesized as a single chain precursor, which is cleaved into a light chain and a heavy chain held together by a disulfide bond. The enzyme is then activated by thrombin, which cleaves a tetradecapeptide from the amino end of the heavy chain; this reaction, which occurs at the surface of endothelial cells, is strongly promoted by thrombomodulin. In terms of processing, the vitamin K-dependent, enzymatic carboxylation of some Glu residues allows the modified protein to bind calcium. The iron and 2-oxoglutarate dependent 3-hydroxylation of aspartate and asparagine is (R) stereospecific within EGF domains. Plasma; synthesized in the liver.

Its subcellular location is the secreted. It localises to the golgi apparatus. The protein localises to the endoplasmic reticulum. It carries out the reaction Degradation of blood coagulation factors Va and VIIIa.. Functionally, protein C is a vitamin K-dependent serine protease that regulates blood coagulation by inactivating factors Va and VIIIa in the presence of calcium ions and phospholipids. Exerts a protective effect on the endothelial cell barrier function. In Mus musculus (Mouse), this protein is Vitamin K-dependent protein C (Proc).